Reading from the N-terminus, the 98-residue chain is Integration host factor subunit beta (98 aa).

Belongs to the bacterial histone-like protein family. As to quaternary structure, heterodimer of an alpha and a beta chain.

This protein is one of the two subunits of integration host factor, a specific DNA-binding protein that functions in genetic recombination as well as in transcriptional and translational control. This is Integration host factor subunit beta from Pseudomonas syringae pv. tomato (strain ATCC BAA-871 / DC3000).